A 191-amino-acid polypeptide reads, in one-letter code: Prostaglandin-H2 D-isomerase (191 aa).

Positions 1 to 24 (MATPNRPWMGLLLLGVLGVLQTPA) are cleaved as a signal peptide. N-linked (GlcNAc...) asparagine glycosylation is present at Asn-51. Cys-65 functions as the Nucleophile in the catalytic mechanism. N-linked (GlcNAc...) asparagine glycosylation is present at Asn-78. Cys-89 and Cys-186 are joined by a disulfide.

Belongs to the calycin superfamily. Lipocalin family. Monomer. In the male reproductive system, it is expressed in the testis and epididymis, and is secreted into the seminal fluid.

Its subcellular location is the rough endoplasmic reticulum. The protein resides in the nucleus membrane. It is found in the golgi apparatus. It localises to the cytoplasm. The protein localises to the perinuclear region. Its subcellular location is the secreted. The enzyme catalyses prostaglandin H2 = prostaglandin D2. In terms of biological role, catalyzes the conversion of PGH2 to PGD2, a prostaglandin involved in smooth muscle contraction/relaxation and a potent inhibitor of platelet aggregation. Involved in a variety of CNS functions, such as sedation, NREM sleep and PGE2-induced allodynia, and may have an anti-apoptotic role in oligodendrocytes. Binds small non-substrate lipophilic molecules, including biliverdin, bilirubin, retinal, retinoic acid and thyroid hormone, and may act as a scavenger for harmful hydrophobic molecules and as a secretory retinoid and thyroid hormone transporter. Possibly involved in development and maintenance of the blood-brain, blood-retina, blood-aqueous humor and blood-testis barrier. It is likely to play important roles in both maturation and maintenance of the central nervous system and male reproductive system. Involved in PLA2G3-dependent maturation of mast cells. PLA2G3 is secreted by immature mast cells and acts on nearby fibroblasts upstream to PTDGS to synthesize PGD2, which in turn promotes mast cell maturation and degranulation via PTGDR. This chain is Prostaglandin-H2 D-isomerase (PTGDS), found in Ovis aries (Sheep).